A 413-amino-acid chain; its full sequence is Eukaryotic initiation factor 4A-9 (413 aa).

The Q motif signature appears at 40–68 (HSFDAMGLKENLLRGIYAYGFEKPSAIQQ). The 171-residue stretch at 71-241 (IVPFCKGLDV…RKFMNKPVRI (171 aa)) folds into the Helicase ATP-binding domain. Residue 84–91 (AQSGTGKT) coordinates ATP. Residues 189–192 (DEAD) carry the DEAD box motif. Residues 252 to 413 (GIKQFYVNVD…ELPANVADLL (162 aa)) form the Helicase C-terminal domain.

Belongs to the DEAD box helicase family. eIF4A subfamily. In terms of assembly, eIF4F is a multi-subunit complex, the composition of which varies with external and internal environmental conditions. It is composed of at least EIF4A, EIF4E and EIF4G.

The catalysed reaction is ATP + H2O = ADP + phosphate + H(+). Its function is as follows. ATP-dependent RNA helicase which is a subunit of the eIF4F complex involved in cap recognition and is required for mRNA binding to ribosome. In the current model of translation initiation, eIF4A unwinds RNA secondary structures in the 5'-UTR of mRNAs which is necessary to allow efficient binding of the small ribosomal subunit, and subsequent scanning for the initiator codon. The protein is Eukaryotic initiation factor 4A-9 of Nicotiana tabacum (Common tobacco).